A 1909-amino-acid chain; its full sequence is Nck-associated protein 5 (1909 aa).

Positions 71–253 (EKLIHELEEE…DLEQQNRTLS (183 aa)) form a coiled coil. Disordered stretches follow at residues 351 to 370 (SSYT…SQNW), 736 to 819 (EEDT…LMEP), 855 to 997 (PLFE…KKPS), 1026 to 1469 (SSSF…APLS), 1486 to 1509 (KGQV…FASW), 1541 to 1592 (GFGN…RTPQ), 1725 to 1750 (FPLP…DAEP), and 1763 to 1885 (SMRA…DYGD). Basic and acidic residues predominate over residues 736 to 748 (EEDTEKNIPKDNV). 4 stretches are compositionally biased toward polar residues: residues 753–789 (RVST…SRSS), 950–965 (APSS…SETA), 981–990 (VISSNPATTE), and 1066–1084 (PRIS…SKSV). Low complexity-rich tracts occupy residues 1110–1131 (SPSS…HNSP) and 1178–1187 (ASKSSVAVNK). Over residues 1241 to 1250 (DGRDGVDNRS) the composition is skewed to basic and acidic residues. The segment covering 1300–1325 (QIITNTAERGNSLTRQNSSTESSPNK) has biased composition (polar residues). Residues 1339–1366 (GRPSGHPSSGKGSLGSSGSFSSQHGSPS) are compositionally biased toward low complexity. Polar residues predominate over residues 1428–1446 (PGRTQHPSTFETSSTSKLE). The span at 1454 to 1466 (ASATATDAVSSEA) shows a compositional bias: low complexity. Basic and acidic residues-rich tracts occupy residues 1547-1560 (LKSE…KPEL) and 1567-1576 (ELIKDTKSAD). Positions 1869–1878 (YSASGGSNSD) are enriched in polar residues.

As to quaternary structure, interacts with the SH3-containing region of the adapter protein NCK. In terms of tissue distribution, expressed in fetal and adult brain, leukocytes and fetal fibroblasts.

The sequence is that of Nck-associated protein 5 (NCKAP5) from Homo sapiens (Human).